Here is an 80-residue protein sequence, read N- to C-terminus: Small membrane A-kinase anchor protein (80 aa).

A lipid anchor (N-myristoyl glycine) is attached at G2.

This sequence belongs to the small membrane AKAP family. May be palmitoylated at Cys-3.

The protein resides in the cell membrane. Functionally, binds to type I regulatory subunits of protein kinase A and may anchor/target them to the plasma membrane. The sequence is that of Small membrane A-kinase anchor protein from Tetraodon nigroviridis (Spotted green pufferfish).